The primary structure comprises 622 residues: MAENTEGDLNSNLLHAPYHTGDPQLDTAIGQWLRWDKNPKTKEQIENLLRNGMNKELRDRLCCRMTFGTAGLRSAMGAGFCYINDLTVIQSTQGMYKYLERCFSDFKQRGFVVGYDTRGQVTSSCSSQRLAKLTAAVLLAKDVPVYLFSRYVPTPFVPYAVQKLKAVAGVMITASHNRKEDNGYKVYWETGAQITSPHDKEILKCIEECVEPWNGSWNDNLVDTSPLKRDPLQDICRRYMEDLKKICFYRELNSKTTLKFVHTSFHGVGHDYVQLAFKVFGFKPPIPVPEQKDPDPDFSTVKCPNPEEGESVLELSLRLAEKENARVVLATDPDADRLAAAELQENGCWKVFTGNELAALFGWWMFDCWKKNKSRNADVKNVYMLATTVSSKILKAIALKEGFHFEETLPGFKWIGSRIIDLLENGKEVLFAFEESIGFLCGTSVLDKDGVSAAVVVAEMASYLETMNITLKQQLVKVYEKYGYHISKTSYFLCYEPPTIKSIFERLRNFDSPKEYPKFCGTFAILHVRDVTTGYDSSQPNKKSVLPVSKNSQMITFTFQNGCVATLRTSGTEPKIKYYAEMCASPDQSDTALLEEELKKLIDALIENFLQPSKNGLIWRSV.

Alpha-D-glucose 1,6-bisphosphate-binding residues include arginine 73 and serine 175. Serine 175 functions as the Phosphoserine intermediate in the catalytic mechanism. Positions 175, 332, and 334 each coordinate Mg(2+). Position 175 is a phosphoserine (serine 175). Residues aspartate 336, arginine 337, glutamate 434, serine 436, and lysine 448 each contribute to the alpha-D-glucose 1,6-bisphosphate site.

Belongs to the phosphohexose mutase family.

The protein localises to the cytoplasm. The protein resides in the cytosol. It catalyses the reaction (2R)-3-phospho-glyceroyl phosphate + alpha-D-glucose 1-phosphate = alpha-D-glucose 1,6-bisphosphate + (2R)-3-phosphoglycerate + H(+). It carries out the reaction alpha-D-glucose 6-phosphate + (2R)-3-phospho-glyceroyl phosphate = alpha-D-glucose 1,6-bisphosphate + (2R)-3-phosphoglycerate + H(+). The catalysed reaction is (2R)-3-phospho-glyceroyl phosphate + alpha-D-ribose 1-phosphate = alpha-D-ribose 1,5-bisphosphate + (2R)-3-phosphoglycerate + H(+). The enzyme catalyses 2-deoxy-alpha-D-ribose 1-phosphate + (2R)-3-phospho-glyceroyl phosphate = 2-deoxy-alpha-D-ribose 1,5-bisphosphate + (2R)-3-phosphoglycerate + H(+). It catalyses the reaction (2R)-3-phospho-glyceroyl phosphate + alpha-D-mannose 1-phosphate = alpha-D-mannose 1,6-bisphosphate + (2R)-3-phosphoglycerate + H(+). Glucose 1,6-bisphosphate synthase using 1,3-bisphosphoglycerate as a phosphate donor and a series of 1-phosphate sugars, including glucose 1-phosphate, mannose 1-phosphate, ribose 1-phosphate and deoxyribose 1-phosphate, as acceptors. In vitro, also exhibits very low phosphopentomutase and phosphoglucomutase activity which are most probably not physiologically relevant. In Homo sapiens (Human), this protein is Glucose 1,6-bisphosphate synthase.